The sequence spans 310 residues: Peroxidase 44 (310 aa).

The first 20 residues, 1–20 (MRSITALFFLFCFLAPSALA), serve as a signal peptide directing secretion. Disulfide bonds link Cys-31–Cys-110, Cys-64–Cys-69, Cys-116–Cys-305, and Cys-194–Cys-218. Catalysis depends on His-62, which acts as the Proton acceptor. Ca(2+) is bound by residues Asp-63, Val-66, Gly-68, Asp-70, and Ser-72. A substrate-binding site is contributed by Pro-156. Position 187 (His-187) interacts with heme b. Ser-188 lines the Ca(2+) pocket. Asp-229, Thr-232, and Asp-237 together coordinate Ca(2+).

It belongs to the peroxidase family. Classical plant (class III) peroxidase subfamily. Heme b serves as cofactor. The cofactor is Ca(2+).

The protein localises to the secreted. It carries out the reaction 2 a phenolic donor + H2O2 = 2 a phenolic radical donor + 2 H2O. In terms of biological role, removal of H(2)O(2), oxidation of toxic reductants, biosynthesis and degradation of lignin, suberization, auxin catabolism, response to environmental stresses such as wounding, pathogen attack and oxidative stress. These functions might be dependent on each isozyme/isoform in each plant tissue. The polypeptide is Peroxidase 44 (PER44) (Arabidopsis thaliana (Mouse-ear cress)).